Here is a 145-residue protein sequence, read N- to C-terminus: Group IID secretory phospholipase A2 (145 aa).

Positions 1 to 20 are cleaved as a signal peptide; the sequence is MELALLCGLVVMAGVIPIQG. Intrachain disulfides connect Cys-46–Cys-138, Cys-48–Cys-64, Cys-63–Cys-118, Cys-69–Cys-145, Cys-70–Cys-111, Cys-79–Cys-104, and Cys-97–Cys-109. His-47, Gly-49, and Gly-51 together coordinate Ca(2+). Residue His-67 is part of the active site. Asp-68 is a binding site for Ca(2+). The N-linked (GlcNAc...) asparagine glycan is linked to Asn-89. The active site involves Asp-112.

This sequence belongs to the phospholipase A2 family. Ca(2+) is required as a cofactor. As to expression, highly expressed in pancreas and spleen and less abundantly in colon, thymus, placenta, small intestine, and prostate.

It is found in the secreted. The enzyme catalyses a 1,2-diacyl-sn-glycero-3-phosphoethanolamine + H2O = a 1-acyl-sn-glycero-3-phosphoethanolamine + a fatty acid + H(+). It carries out the reaction 1-hexadecanoyl-2-(9Z-octadecenoyl)-sn-glycero-3-phosphoethanolamine + H2O = 1-hexadecanoyl-sn-glycero-3-phosphoethanolamine + (9Z)-octadecenoate + H(+). It catalyses the reaction 1-hexadecanoyl-2-(9Z,12Z-octadecadienoyl)-sn-glycero-3-phosphoethanolamine + H2O = 1-hexadecanoyl-sn-glycero-3-phosphoethanolamine + (9Z,12Z)-octadecadienoate + H(+). The catalysed reaction is 1,2-dihexadecanoyl-sn-glycero-3-phospho-(1'-sn-glycerol) + H2O = 1-hexadecanoyl-sn-glycero-3-phospho-(1'-sn-glycerol) + hexadecanoate + H(+). The enzyme catalyses 1-hexadecanoyl-2-(9Z-octadecenoyl)-sn-glycero-3-phospho-(1'-sn-glycerol) + H2O = 1-hexadecanoyl-sn-glycero-3-phospho-(1'-sn-glycerol) + (9Z)-octadecenoate + H(+). It carries out the reaction a 1,2-diacyl-sn-glycero-3-phosphocholine + H2O = a 1-acyl-sn-glycero-3-phosphocholine + a fatty acid + H(+). It catalyses the reaction 1,2-dihexadecanoyl-sn-glycero-3-phosphocholine + H2O = 1-hexadecanoyl-sn-glycero-3-phosphocholine + hexadecanoate + H(+). The catalysed reaction is 1-hexadecanoyl-2-(9Z-octadecenoyl)-sn-glycero-3-phosphocholine + H2O = 1-hexadecanoyl-sn-glycero-3-phosphocholine + (9Z)-octadecenoate + H(+). The enzyme catalyses 1-hexadecanoyl-2-(9Z,12Z-octadecadienoyl)-sn-glycero-3-phosphocholine + H2O = (9Z,12Z)-octadecadienoate + 1-hexadecanoyl-sn-glycero-3-phosphocholine + H(+). It carries out the reaction 1-hexadecanoyl-2-(4Z,7Z,10Z,13Z,16Z,19Z-docosahexaenoyl)-sn-glycero-3-phosphocholine + H2O = (4Z,7Z,10Z,13Z,16Z,19Z)-docosahexaenoate + 1-hexadecanoyl-sn-glycero-3-phosphocholine + H(+). In terms of biological role, secretory calcium-dependent phospholipase A2 that primarily targets extracellular lipids, exerting anti-inflammatory and immunosuppressive functions. Hydrolyzes the ester bond of the fatty acyl group attached at sn-2 position of phospholipids (phospholipase A2 activity) with preference for phosphatidylethanolamines and phosphatidylglycerols over phosphatidylcholines. In draining lymph nodes, selectively hydrolyzes diacyl and alkenyl forms of phosphatidylethanolamines, releasing omega-3 polyunsaturated fatty acids (PUFAs) such as eicosapentaenoate and docosahexaenoate that are precursors of the anti-inflammatory lipid mediators, resolvins. During the resolution phase of acute inflammation drives docosahexaenoate-derived resolvin D1 synthesis, which suppresses dendritic cell activation and T-helper 1 immune response. May act in an autocrine and paracrine manner. Via a mechanism independent of its catalytic activity, promotes differentiation of regulatory T cells (Tregs) and participates in the maintenance of immune tolerance. May contribute to lipid remodeling of cellular membranes and generation of lipid mediators involved in pathogen clearance. Displays bactericidal activity against Gram-positive bacteria by directly hydrolyzing phospholipids of the bacterial membrane. The sequence is that of Group IID secretory phospholipase A2 (PLA2G2D) from Homo sapiens (Human).